Consider the following 40-residue polypeptide: Photosystem II reaction center protein J (40 aa).

Residues 8–28 (IPLWLIGTVTGILVIGLIGVF) form a helical membrane-spanning segment.

It belongs to the PsbJ family. As to quaternary structure, PSII is composed of 1 copy each of membrane proteins PsbA, PsbB, PsbC, PsbD, PsbE, PsbF, PsbH, PsbI, PsbJ, PsbK, PsbL, PsbM, PsbT, PsbX, PsbY, PsbZ, Psb30/Ycf12, at least 3 peripheral proteins of the oxygen-evolving complex and a large number of cofactors. It forms dimeric complexes.

It is found in the plastid. Its subcellular location is the chloroplast thylakoid membrane. Its function is as follows. One of the components of the core complex of photosystem II (PSII). PSII is a light-driven water:plastoquinone oxidoreductase that uses light energy to abstract electrons from H(2)O, generating O(2) and a proton gradient subsequently used for ATP formation. It consists of a core antenna complex that captures photons, and an electron transfer chain that converts photonic excitation into a charge separation. The protein is Photosystem II reaction center protein J of Nymphaea alba (White water-lily).